The following is a 431-amino-acid chain: MGPVIGMTPDKRAETPGAEKIAGLSQIYKMGSLPEAVDAARPKATLVDSESADDELTNLNWLHESTNLLTNFSLGSEGLPIVSPLYDIEGDDVPSFGPACYQNPEKKSATSKPPYSFSLLIYMAIEHSPNKCLPVKEIYSWILDHFPYFATAPTGWKNSVRHNLSLNKCFQKVERSHGKVNGKGSLWCVDPEYKPNLIQALKKQPFSSASSQNGSLSPHYLSSVIKQNQVRNLKESDIDAAAAMMLLNTSIEQGILECEKPLPLKTALQKKRSYGNAFHHPSAVRLQESDSLATSIDPKEDHNYSASSMAAQRCASRSSVSSLSSVDEVYEFIPKNSHVGSDGSEGFHSEEDTDVDYEDDPLGDSGYASQPCAKISEKGQSGKKMRKQTCQEIDEELKEAAGSLLHLAGIRTCLGSLISTAKTQNQKQRKK.

The fork-head DNA-binding region spans 112–208; sequence KPPYSFSLLI…QALKKQPFSS (97 aa). The tract at residues 364–387 is disordered; sequence DSGYASQPCAKISEKGQSGKKMRK.

The protein localises to the nucleus. In terms of biological role, binds to the purine-rich region in HTLV-I LTR. The sequence is that of Forkhead box protein N2 (FOXN2) from Homo sapiens (Human).